We begin with the raw amino-acid sequence, 285 residues long: MDAIKKKMQAMKLEKDNALDRALLCENQARDANLRAEKAEEEARTLQKKIQTIENDLDQTQGQETLVNGKLEGKEKALQNAESEVAALNRRIQLLGEDLDRSEERLASATAKLSEASAAADESERARKILENRSLADEERMDALENQLKEARFLAEEADKKYDEVARKLAMVEADLERAEERAEAGEAKIVELEEELRVVGNNLKSLEVSEEKANQREEEYKNQIKTLTTRLKEAEARAEFAERSVQKLQKEVDRLEDELVSEKEKYREIGDDLDTAFVELILKE.

A coiled-coil region spans residues 1–273; it reads MDAIKKKMQA…KEKYREIGDD (273 aa).

The protein belongs to the tropomyosin family. Homodimer.

Functionally, tropomyosin, in association with the troponin complex, plays a central role in the calcium dependent regulation of muscle contraction. This Chironomus kiiensis (Midge) protein is Tropomyosin.